An 81-amino-acid polypeptide reads, in one-letter code: Omega-conotoxin-like TxO4 (81 aa).

Residues 1–22 form the signal peptide; it reads MKLTCVVIVAVLFLTAWTFVTA. A propeptide spanning residues 23–52 is cleaved from the precursor; the sequence is VPHSSNALENLYLKARHEMENPEASKLNTR. Disulfide bonds link C55–C72, C62–C76, and C71–C80. Residue P70 is modified to 4-hydroxyproline; partial. W75 is subject to 6'-bromotryptophan; partial.

Belongs to the conotoxin O1 superfamily. Post-translationally, txO4 is found with and without hydroxyproline and these two forms have a bromotryptophan. Truncated TxO4 is found with and without bromotryptophan, and these two forms have no hydroxyproline. In terms of tissue distribution, expressed by the venom duct.

It is found in the secreted. Omega-conotoxins act at presynaptic membranes, they bind and block voltage-gated calcium channels (Cav). This chain is Omega-conotoxin-like TxO4, found in Conus textile (Cloth-of-gold cone).